Here is a 287-residue protein sequence, read N- to C-terminus: Ribosomal RNA small subunit methyltransferase I (287 aa).

Belongs to the methyltransferase superfamily. RsmI family.

The protein resides in the cytoplasm. The catalysed reaction is cytidine(1402) in 16S rRNA + S-adenosyl-L-methionine = 2'-O-methylcytidine(1402) in 16S rRNA + S-adenosyl-L-homocysteine + H(+). Its function is as follows. Catalyzes the 2'-O-methylation of the ribose of cytidine 1402 (C1402) in 16S rRNA. This chain is Ribosomal RNA small subunit methyltransferase I, found in Streptococcus pyogenes serotype M3 (strain ATCC BAA-595 / MGAS315).